We begin with the raw amino-acid sequence, 493 residues long: Monocarboxylate transporter 1 (493 aa).

Residues 1 to 22 (MPPAIGGPVGYTPPDGGWGWAV) are Cytoplasmic-facing. A helical membrane pass occupies residues 23-44 (LVGAFISIGFSYAFPKSITVFF). Lys-38 contacts (S)-lactate. At 45–55 (KEIEVIFSATT) the chain is on the extracellular side. A helical membrane pass occupies residues 56 to 80 (SEVSWISSIMLAVMYAGGPISSILV). Over 81-84 (NKYG) the chain is Cytoplasmic. A helical membrane pass occupies residues 85–105 (SRPVMIAGGCLSGCGLIAASF). The Extracellular portion of the chain corresponds to 106-109 (CNTV). Residues 110 to 132 (QELYLCIGVIGGLGLAFNLNPAL) traverse the membrane as a helical segment. At 133–146 (TMIGKYFYKKRPLA) the chain is on the cytoplasmic side. Residues 147-169 (NGLAMAGSPVFLSTLAPLNQAFF) traverse the membrane as a helical segment. Residues 170–174 (DIFDW) are Extracellular-facing. Residues 175 to 194 (RGSFLILGGLLLNCCVAGSL) traverse the membrane as a helical segment. The Cytoplasmic segment spans residues 195–254 (MRPIGPEQVKLEKLKSKESLQEAGKSDANTDLIGGSPKGEKLSVFQTINKFLDLSLFTHR). Phosphoserine is present on residues Ser-210, Ser-213, and Ser-220. Thr-224 carries the phosphothreonine modification. A Phosphoserine modification is found at Ser-230. Residues 255–281 (GFLLYLSGNVVMFFGLFTPLVFLSSYG) traverse the membrane as a helical segment. At 282-288 (KSKDFSS) the chain is on the extracellular side. The chain crosses the membrane as a helical span at residues 289–310 (EKSAFLLSILAFVDMVARPSMG). Asp-302 lines the H(+) pocket. Arg-306 provides a ligand contact to (S)-lactate. Residues 311–321 (LAANTKWIRPR) lie on the Cytoplasmic side of the membrane. The helical transmembrane segment at 322–342 (IQYFFAASVVANGVCHLLAPL) threads the bilayer. Residues 343–346 (STTY) are Extracellular-facing. The helical transmembrane segment at 347 to 368 (VGFCVYAGVFGFAFGWLSSVLF) threads the bilayer. Over 369–382 (ETLMDLIGPQRFSS) the chain is Cytoplasmic. A helical membrane pass occupies residues 383–403 (AVGLVTIVECCPVLLGPPLLG). Residues 404-414 (RLNDMYGDYKY) are Extracellular-facing. The chain crosses the membrane as a helical span at residues 415-436 (TYWACGVILIIAGIYLFIGMGI). Topologically, residues 437 to 493 (NYRLLAKEQKAEEKQKREGKEDEASTDVDEKPKETMKAAQSPQQHSSGDPTEEESPV) are cytoplasmic. Positions 447 to 472 (AEEKQKREGKEDEASTDVDEKPKETM) are enriched in basic and acidic residues. The segment at 447-493 (AEEKQKREGKEDEASTDVDEKPKETMKAAQSPQQHSSGDPTEEESPV) is disordered. Ser-461 carries the post-translational modification Phosphoserine. Thr-462 carries the phosphothreonine modification. A compositionally biased stretch (polar residues) spans 474 to 485 (AAQSPQQHSSGD). A phosphoserine mark is found at Ser-477, Ser-482, Ser-483, and Ser-491.

This sequence belongs to the major facilitator superfamily. Monocarboxylate porter (TC 2.A.1.13) family. Interacts with isoform 2 of BSG; interaction mediates SLC16A1 targeting to the plasma membrane. Interacts with EMB; interaction mediates SLC16A1 targeting to the plasma membrane. In terms of tissue distribution, detected in liver, brain, spinal cord, spermatozoa, muscle, white adipose tissue and brown adipose tissue (at protein level). Widely expressed, except in pancreas, where expression is not detectable.

It is found in the cell membrane. Its subcellular location is the basolateral cell membrane. It localises to the apical cell membrane. It catalyses the reaction (S)-lactate(in) + H(+)(in) = (S)-lactate(out) + H(+)(out). The enzyme catalyses acetate(out) + H(+)(out) = acetate(in) + H(+)(in). The catalysed reaction is acetoacetate(out) + H(+)(out) = acetoacetate(in) + H(+)(in). It carries out the reaction pyruvate(out) + H(+)(out) = pyruvate(in) + H(+)(in). It catalyses the reaction (R)-3-hydroxybutanoate(out) + H(+)(out) = (R)-3-hydroxybutanoate(in) + H(+)(in). The enzyme catalyses 3-methyl-2-oxobutanoate(out) + H(+)(out) = 3-methyl-2-oxobutanoate(in) + H(+)(in). The catalysed reaction is 4-methyl-2-oxopentanoate(out) + H(+)(out) = 4-methyl-2-oxopentanoate(in) + H(+)(in). It carries out the reaction succinate(in) + 2 H(+)(in) = succinate(out) + 2 H(+)(out). Functionally, bidirectional proton-coupled monocarboxylate transporter. Catalyzes the rapid transport across the plasma membrane of many monocarboxylates such as lactate, pyruvate, acetate and the ketone bodies acetoacetate and beta-hydroxybutyrate, and thus contributes to the maintenance of intracellular pH. The transport direction is determined by the proton motive force and the concentration gradient of the substrate monocarboxylate. MCT1 is a major lactate exporter. Plays a role in cellular responses to a high-fat diet by modulating the cellular levels of lactate and pyruvate that contribute to the regulation of central metabolic pathways and insulin secretion, with concomitant effects on plasma insulin levels and blood glucose homeostasis. Facilitates the protonated monocarboxylate form of succinate export, that its transient protonation upon muscle cell acidification in exercising muscle and ischemic heart. Functions via alternate outward- and inward-open conformation states. Protonation and deprotonation of 302-Asp is essential for the conformational transition. The chain is Monocarboxylate transporter 1 (Slc16a1) from Mus musculus (Mouse).